Reading from the N-terminus, the 145-residue chain is MNKMERQQQIKRIIQAEHIGTQEDIKNHLQKEGIVVTQATLSRDLREIGLLKLRDEQGKLYYSLSEHVATPFSPEVRFYVLKVDRAGFMLVLHTNLGEADVLANLIDNDAIEDILGTIAGADTLLVICRDEEIAKRFEKDLAAGL.

It belongs to the ArgR family.

It localises to the cytoplasm. It functions in the pathway amino-acid biosynthesis; L-arginine biosynthesis [regulation]. Regulates arginine biosynthesis genes. The polypeptide is Arginine repressor (Streptococcus pyogenes serotype M6 (strain ATCC BAA-946 / MGAS10394)).